Here is a 181-residue protein sequence, read N- to C-terminus: Probable N-acetyltransferase YjcK (181 aa).

The N-acetyltransferase domain occupies 7 to 172 (IYVRPLEVTD…NGVWEDHQVL (166 aa)).

It belongs to the acetyltransferase family. RimJ subfamily.

It catalyses the reaction an N-terminal L-alpha-aminoacyl-[protein] + acetyl-CoA = N-terminal N(alpha)-acetyl-L-alpha-aminoacyl-[protein] + CoA + H(+). Functionally, probable N-terminal protein acetyltransferase. This is Probable N-acetyltransferase YjcK (yjcK) from Bacillus subtilis (strain 168).